A 272-amino-acid polypeptide reads, in one-letter code: ATP phosphoribosyltransferase regulatory subunit (272 aa).

This sequence belongs to the class-II aminoacyl-tRNA synthetase family. HisZ subfamily. As to quaternary structure, heteromultimer composed of HisG and HisZ subunits.

It is found in the cytoplasm. Its pathway is amino-acid biosynthesis; L-histidine biosynthesis; L-histidine from 5-phospho-alpha-D-ribose 1-diphosphate: step 1/9. Its function is as follows. Required for the first step of histidine biosynthesis. May allow the feedback regulation of ATP phosphoribosyltransferase activity by histidine. This is ATP phosphoribosyltransferase regulatory subunit from Staphylococcus aureus (strain USA300).